Consider the following 203-residue polypeptide: Excretory canal abnormal exc-13 (203 aa).

The signal sequence occupies residues 1–20; it reads MIGFLKFALIGTVLLGVANG. Residues Asn-32, Asn-84, and Asn-188 are each glycosylated (N-linked (GlcNAc...) asparagine).

It belongs to the UPF0376 family.

Its subcellular location is the secreted. In Caenorhabditis elegans, this protein is Excretory canal abnormal exc-13.